The chain runs to 341 residues: BZIP domain-containing transcription factor BZP4 (341 aa).

Composition is skewed to polar residues over residues 1-32 (MESS…PTNE), 61-76 (LTES…SHSL), 128-139 (PLTSHSRSQITH), and 150-163 (YSSS…SPVS). Disordered stretches follow at residues 1-95 (MESS…PHGM) and 118-254 (TNHS…DKKQ). A compositionally biased stretch (low complexity) spans 178–192 (SPSSSSFPSSIPRTP). 2 stretches are compositionally biased toward basic and acidic residues: residues 225–234 (TGDRKHEKDS) and 242–254 (EEYK…DKKQ). Residues 250–269 (KDKKQVRNRIGARRFRAKRK) are basic motif. The bZIP domain occupies 250–308 (KDKKQVRNRIGARRFRAKRKDYVNQLEAGIRLRDDEITNLQSQLESQRNEINELRLQLK). The tract at residues 279 to 307 (IRLRDDEITNLQSQLESQRNEINELRLQL) is leucine-zipper.

It belongs to the bZIP family.

The protein localises to the nucleus. The protein resides in the cytoplasm. In terms of biological role, transcription factor that promotes the production of melanin, a pigment that serves as antioxidant, reactive oxygen species (ROS) scavenger and that protect fungal pathogens from radiation and host immune responses. In Cryptococcus neoformans var. grubii serotype A (strain H99 / ATCC 208821 / CBS 10515 / FGSC 9487) (Filobasidiella neoformans var. grubii), this protein is BZIP domain-containing transcription factor BZP4.